We begin with the raw amino-acid sequence, 650 residues long: Acetoacetyl-coenzyme A synthetase (650 aa).

199–202 (YNGK) serves as a coordination point for CoA. Residues 392–394 (GSP), Asp-504, Arg-519, and Arg-530 each bind ATP. Val-546 contacts Mg(2+). Position 587 (Arg-587) interacts with CoA. Lys-612 bears the N6-acetyllysine mark.

Belongs to the ATP-dependent AMP-binding enzyme family. Mg(2+) is required as a cofactor. Acetylated. Deacetylation by the SIR2-homolog deacetylase activates the enzyme.

The enzyme catalyses acetoacetate + ATP + CoA = acetoacetyl-CoA + AMP + diphosphate. It functions in the pathway biopolymer metabolism; poly-(R)-3-hydroxybutanoate degradation. Its function is as follows. Catalyzes the conversion of acetoacetate into acetoacetyl-CoA. Is involved in poly-3-hydroxybutyrate (PHB) degradation, which allows growth of R.meliloti on PHB cycle intermediates. This is Acetoacetyl-coenzyme A synthetase from Rhizobium meliloti (strain 1021) (Ensifer meliloti).